We begin with the raw amino-acid sequence, 476 residues long: Cardiolipin synthase (476 aa).

The next 2 membrane-spanning stretches (helical) occupy residues 2–22 (HLFINMIFLINIVFIISIIFI) and 31–51 (WAWILILTFLPILGFIIYILF). PLD phosphodiesterase domains lie at 207-234 (INYRNHRKILIIDSKVAFLGGFNIGDEY) and 389-416 (EKGFLHAKTIVADSSICSVGTANMDIRS). Catalysis depends on residues histidine 212, lysine 214, aspartate 219, histidine 394, lysine 396, and aspartate 401.

It belongs to the phospholipase D family. Cardiolipin synthase subfamily.

It localises to the cell membrane. It catalyses the reaction 2 a 1,2-diacyl-sn-glycero-3-phospho-(1'-sn-glycerol) = a cardiolipin + glycerol. Catalyzes the reversible phosphatidyl group transfer from one phosphatidylglycerol molecule to another to form cardiolipin (CL) (diphosphatidylglycerol) and glycerol. The polypeptide is Cardiolipin synthase (cls) (Clostridium perfringens (strain ATCC 13124 / DSM 756 / JCM 1290 / NCIMB 6125 / NCTC 8237 / Type A)).